We begin with the raw amino-acid sequence, 824 residues long: Translation initiation factor IF-2 (824 aa).

Disordered regions lie at residues 1–32 (MSDT…GRTK) and 45–232 (VPKA…MGGQ). Low complexity predominate over residues 45-57 (VPKAGATTSAGGK). The segment covering 86–144 (KAREAEEEAARIAEEKARAEERERRRAEQEERERAEREREESLKAKAEEDKRRKDEAEA) has biased composition (basic and acidic residues). A compositionally biased stretch (low complexity) spans 145–167 (AAKAAAAPAAEPVVQRPAAKAAP). Positions 170 to 193 (APRKQQDRDRDNKRGGKGNDDSRR) are enriched in basic and acidic residues. Positions 321–489 (TRPPVVTIMG…AIALQAEILE (169 aa)) constitute a tr-type G domain. The G1 stretch occupies residues 330–337 (GHVDHGKT). Position 330-337 (330-337 (GHVDHGKT)) interacts with GTP. The interval 355–359 (GITQH) is G2. The interval 377–380 (DTPG) is G3. GTP contacts are provided by residues 377–381 (DTPGH) and 431–434 (NKID). The G4 stretch occupies residues 431-434 (NKID). Positions 467–469 (SAI) are G5.

It belongs to the TRAFAC class translation factor GTPase superfamily. Classic translation factor GTPase family. IF-2 subfamily.

It is found in the cytoplasm. Its function is as follows. One of the essential components for the initiation of protein synthesis. Protects formylmethionyl-tRNA from spontaneous hydrolysis and promotes its binding to the 30S ribosomal subunits. Also involved in the hydrolysis of GTP during the formation of the 70S ribosomal complex. The sequence is that of Translation initiation factor IF-2 from Roseobacter denitrificans (strain ATCC 33942 / OCh 114) (Erythrobacter sp. (strain OCh 114)).